Reading from the N-terminus, the 487-residue chain is Protein nucleotidyltransferase YdiU (487 aa).

ATP is bound by residues glycine 86, glycine 88, arginine 89, lysine 109, aspartate 121, glycine 122, arginine 172, and arginine 179. Residue aspartate 248 is the Proton acceptor of the active site. Residues asparagine 249 and aspartate 258 each coordinate Mg(2+). ATP is bound at residue aspartate 258.

It belongs to the SELO family. Mg(2+) serves as cofactor. Requires Mn(2+) as cofactor.

The catalysed reaction is L-seryl-[protein] + ATP = 3-O-(5'-adenylyl)-L-seryl-[protein] + diphosphate. It catalyses the reaction L-threonyl-[protein] + ATP = 3-O-(5'-adenylyl)-L-threonyl-[protein] + diphosphate. It carries out the reaction L-tyrosyl-[protein] + ATP = O-(5'-adenylyl)-L-tyrosyl-[protein] + diphosphate. The enzyme catalyses L-histidyl-[protein] + UTP = N(tele)-(5'-uridylyl)-L-histidyl-[protein] + diphosphate. The catalysed reaction is L-seryl-[protein] + UTP = O-(5'-uridylyl)-L-seryl-[protein] + diphosphate. It catalyses the reaction L-tyrosyl-[protein] + UTP = O-(5'-uridylyl)-L-tyrosyl-[protein] + diphosphate. Its function is as follows. Nucleotidyltransferase involved in the post-translational modification of proteins. It can catalyze the addition of adenosine monophosphate (AMP) or uridine monophosphate (UMP) to a protein, resulting in modifications known as AMPylation and UMPylation. In Sphingopyxis alaskensis (strain DSM 13593 / LMG 18877 / RB2256) (Sphingomonas alaskensis), this protein is Protein nucleotidyltransferase YdiU.